The following is a 24-amino-acid chain: Cytochrome c3-2 (24 aa).

The interval 1 to 24 (GNAPAADMVLKAPGDAKMTKTAVP) is disordered.

Post-translationally, binds 4 heme groups per subunit.

It is found in the periplasm. Functionally, participates in sulfate respiration coupled with phosphorylation by transferring electrons from the enzyme dehydrogenase to ferredoxin. This chain is Cytochrome c3-2, found in Nitratidesulfovibrio vulgaris (Desulfovibrio vulgaris).